The chain runs to 234 residues: R-spondin-4 (234 aa).

The N-terminal stretch at 1-19 (MRAPLCLLLLVAHAVDMLA) is a signal peptide. Asn-34 carries an N-linked (GlcNAc...) asparagine glycan. Disulfide bonds link Cys-35–Cys-41, Cys-38–Cys-47, Cys-50–Cys-69, Cys-73–Cys-88, Cys-91–Cys-98, Cys-95–Cys-104, Cys-107–Cys-118, Cys-122–Cys-135, Cys-139–Cys-181, Cys-150–Cys-157, and Cys-190–Cys-196. One copy of the FU repeat lies at 85-128 (VNRCKKCGATCESCFSQDFCIRCKRQFYLYKGKCLPTCPPGTLA). The TSP type-1 domain occupies 138–197 (ECELGPWGGWSPCTHNGKTCGSAWGLESRVREAGRAGHEEAATCQVLSESRKCPIQRPCP). Positions 190 to 234 (CPIQRPCPGERSPGQKKGRKDRRPRKDRKLDRRLDVRPRQPGLQP) are disordered. The segment covering 203-216 (GQKKGRKDRRPRKD) has biased composition (basic residues). The span at 217–227 (RKLDRRLDVRP) shows a compositional bias: basic and acidic residues.

The protein belongs to the R-spondin family. In terms of assembly, binds heparin. Interacts with LGR4, LGR5 and LGR6. In terms of processing, tyr-112 may be phosphorylated; however as this position is probably extracellular, the vivo relevance is not proven.

It is found in the secreted. In terms of biological role, activator of the canonical Wnt signaling pathway by acting as a ligand for LGR4-6 receptors. Upon binding to LGR4-6 (LGR4, LGR5 or LGR6), LGR4-6 associate with phosphorylated LRP6 and frizzled receptors that are activated by extracellular Wnt receptors, triggering the canonical Wnt signaling pathway to increase expression of target genes. Also regulates the canonical Wnt/beta-catenin-dependent pathway and non-canonical Wnt signaling by acting as an inhibitor of ZNRF3, an important regulator of the Wnt signaling pathway. The polypeptide is R-spondin-4 (RSPO4) (Homo sapiens (Human)).